Here is a 173-residue protein sequence, read N- to C-terminus: Development-specific protein S (173 aa).

Beta/gamma crystallin 'Greek key' domains lie at 2 to 46 and 48 to 86; these read ANIT…KVPP and VKAI…RVIS. Ca(2+) contacts are provided by Tyr8, Asn37, Thr38, Ser40, Gln54, Asn77, Asn78, and Ser80. Residues 87 to 90 are connecting peptide; sequence VPVQ. Beta/gamma crystallin 'Greek key' domains lie at 91-135 and 136-173; these read PRAR…KPQG and LAVV…IRIS.

This sequence belongs to the beta/gamma-crystallin family.

Protein S, induced in large amounts during fruiting body formation, assembles on the surface of myxospores in the presence of calcium ions. This Myxococcus xanthus protein is Development-specific protein S (tps).